Consider the following 591-residue polypeptide: Beta-fructofuranosidase, insoluble isoenzyme CWINV4 (591 aa).

The signal sequence occupies residues 1–22; that stretch reads MAISNVISVLLLLLVLINLSNQ. Substrate contacts are provided by residues 61-64, Gln-80, Trp-88, and 123-124; these read WIND and WS. The active site involves Asp-64. N-linked (GlcNAc...) asparagine glycans are attached at residues Asn-145 and Asn-182. Residues 187–188, Glu-242, and Asp-276 contribute to the substrate site; that span reads RD. Residues Asn-336, Asn-472, and Asn-565 are each glycosylated (N-linked (GlcNAc...) asparagine). The cysteines at positions 436 and 484 are disulfide-linked.

This sequence belongs to the glycosyl hydrolase 32 family. As to expression, expressed in flowers, and seeds, and, to a lower extent, in seedlings.

It localises to the secreted. Its subcellular location is the extracellular space. The protein localises to the apoplast. The protein resides in the cell wall. The catalysed reaction is Hydrolysis of terminal non-reducing beta-D-fructofuranoside residues in beta-D-fructofuranosides.. The chain is Beta-fructofuranosidase, insoluble isoenzyme CWINV4 (CWINV4) from Arabidopsis thaliana (Mouse-ear cress).